We begin with the raw amino-acid sequence, 383 residues long: Cell division protein FtsZ (383 aa).

Residues 20–24 (GGGGN), 107–109 (GTG), E138, R142, and N186 contribute to the GTP site.

The protein belongs to the FtsZ family. As to quaternary structure, homodimer. Polymerizes to form a dynamic ring structure in a strictly GTP-dependent manner. Interacts directly with several other division proteins.

Its subcellular location is the cytoplasm. Its function is as follows. Essential cell division protein that forms a contractile ring structure (Z ring) at the future cell division site. The regulation of the ring assembly controls the timing and the location of cell division. One of the functions of the FtsZ ring is to recruit other cell division proteins to the septum to produce a new cell wall between the dividing cells. Binds GTP and shows GTPase activity. This chain is Cell division protein FtsZ, found in Escherichia coli O157:H7.